A 1960-amino-acid chain; its full sequence is Myosin-9 (1960 aa).

Alanine 2 carries the N-acetylalanine modification. Residues alanine 2 to leucine 838 are mediates interaction with LIMCH1. An N6-acetyllysine modification is found at lysine 8. Residue tyrosine 11 is modified to Phosphotyrosine. Positions alanine 27–proline 77 constitute a Myosin N-terminal SH3-like domain. Residues serine 81 to aspartate 776 enclose the Myosin motor domain. Lysine 102 carries the post-translational modification N6-acetyllysine. Residue glycine 174 to threonine 181 participates in ATP binding. N6-acetyllysine occurs at positions 299, 435, and 613. Residue serine 628 is modified to Phosphoserine. The actin-binding stretch occupies residues leucine 654 to histidine 676. A Phosphotyrosine modification is found at tyrosine 754. In terms of domain architecture, IQ spans isoleucine 779 to alanine 808. Positions leucine 837–leucine 1926 form a coiled coil. The residue at position 850 (lysine 850) is an N6-succinyllysine. Lysine 860, lysine 975, and lysine 1024 each carry N6-acetyllysine. Serine 1114 bears the Phosphoserine mark. Residues glutamine 1117–leucine 1137 are disordered. Positions serine 1122–leucine 1137 are enriched in basic and acidic residues. N6-acetyllysine is present on residues lysine 1234, lysine 1249, lysine 1357, lysine 1392, lysine 1404, lysine 1410, lysine 1459, and lysine 1638. Lysine 1669 carries the N6-succinyllysine modification. Position 1714 is a phosphoserine (serine 1714). N6-acetyllysine is present on residues lysine 1793, lysine 1802, and lysine 1845. The interval arginine 1877 to lysine 1918 is disordered. The residue at position 1923 (arginine 1923) is an Omega-N-methylarginine. Residues valine 1934–glutamate 1960 form a disordered region. Serine 1943 carries the post-translational modification Phosphoserine. Residues aspartate 1948–glutamate 1960 show a composition bias toward basic and acidic residues.

It belongs to the TRAFAC class myosin-kinesin ATPase superfamily. Myosin family. Myosin is a hexameric protein that consists of 2 heavy chain subunits (MHC), 2 alkali light chain subunits (MLC) and 2 regulatory light chain subunits (MLC-2). Interacts with RASIP1. Interacts with DDR1. Interacts with PDLIM2. Interacts with SVIL. Interacts with HTRA3. Interacts with Myo7a. Interacts with CFAP95. Interacts with LIMCH1; independently of the integration of MYH9 into the myosin complex. Interacts with RAB3A. Interacts with ZBED4. Interacts with S100A4; this interaction increases cell motility. ISGylated. In terms of processing, ubiquitination.

The protein resides in the cytoplasm. It localises to the cytoskeleton. It is found in the cell cortex. The protein localises to the cytoplasmic vesicle. Its subcellular location is the secretory vesicle. The protein resides in the cortical granule. In terms of biological role, cellular myosin that appears to play a role in cytokinesis, cell shape, and specialized functions such as secretion and capping. Required for cortical actin clearance prior to oocyte exocytosis. Promotes cell motility in conjunction with S100A4. During cell spreading, plays an important role in cytoskeleton reorganization, focal contact formation (in the margins but not the central part of spreading cells), and lamellipodial retraction; this function is mechanically antagonized by MYH10. The polypeptide is Myosin-9 (MYH9) (Canis lupus familiaris (Dog)).